The chain runs to 337 residues: Heat-inducible transcription repressor HrcA (337 aa).

The protein belongs to the HrcA family.

Its function is as follows. Negative regulator of class I heat shock genes (grpE-dnaK-dnaJ and groELS operons). Prevents heat-shock induction of these operons. In Pseudarthrobacter chlorophenolicus (strain ATCC 700700 / DSM 12829 / CIP 107037 / JCM 12360 / KCTC 9906 / NCIMB 13794 / A6) (Arthrobacter chlorophenolicus), this protein is Heat-inducible transcription repressor HrcA.